The sequence spans 343 residues: Ribosomal RNA small subunit methyltransferase C (343 aa).

This sequence belongs to the methyltransferase superfamily. RsmC family. As to quaternary structure, monomer.

Its subcellular location is the cytoplasm. The enzyme catalyses guanosine(1207) in 16S rRNA + S-adenosyl-L-methionine = N(2)-methylguanosine(1207) in 16S rRNA + S-adenosyl-L-homocysteine + H(+). Its function is as follows. Specifically methylates the guanine in position 1207 of 16S rRNA in the 30S particle. This Escherichia coli O8 (strain IAI1) protein is Ribosomal RNA small subunit methyltransferase C.